Consider the following 400-residue polypeptide: Zinc finger protein 514 (400 aa).

The KRAB domain occupies 1 to 72; sequence MTFEDVAVEF…EREISTGAHS (72 aa). 7 consecutive C2H2-type zinc fingers follow at residues 204-226, 232-254, 260-282, 288-310, 316-338, 344-366, and 372-394; these read CKCN…QRCH, YECS…QRTH, YECS…YRFH, YKCN…QRTH, YECR…YRFH, YKCN…YRFH, and YKCN…QRSH.

This sequence belongs to the krueppel C2H2-type zinc-finger protein family.

The protein resides in the nucleus. Functionally, may be involved in transcriptional regulation. The sequence is that of Zinc finger protein 514 (ZNF514) from Homo sapiens (Human).